The chain runs to 131 residues: D-ribose pyranase (131 aa).

His20 serves as the catalytic Proton donor. Substrate contacts are provided by residues Asp28, His98, and 120 to 122; that span reads YAN.

The protein belongs to the RbsD / FucU family. RbsD subfamily. Homodecamer.

It localises to the cytoplasm. It catalyses the reaction beta-D-ribopyranose = beta-D-ribofuranose. It functions in the pathway carbohydrate metabolism; D-ribose degradation; D-ribose 5-phosphate from beta-D-ribopyranose: step 1/2. Its function is as follows. Catalyzes the interconversion of beta-pyran and beta-furan forms of D-ribose. The polypeptide is D-ribose pyranase (Bacillus cereus (strain 03BB102)).